Reading from the N-terminus, the 126-residue chain is MMESTRKGCWGEERVLRLLRRRGWQLVSQRWSCRYGELDLVLEKQQRLLVVEVKSRRSRGLDLWGLSAFNKGKQLRLKRAIGCWLATHPYFAEHSLELVLALVPLPPSRNTLDWIRIDDLDIDAAD.

Belongs to the UPF0102 family.

The polypeptide is UPF0102 protein P9303_16141 (Prochlorococcus marinus (strain MIT 9303)).